The sequence spans 230 residues: MQQRRRPPIASRETLQALLSEGAQALGVALSDAQRGALLDYVALLAKWNAVYNLTAIRDPRQMLIQHILDSLSIVPHLGAHGAAAAALDVGSGGGLPGVVLAIALPGWRVTLNDIVHKKSAFQNQAKAELKLGNLSVVTGRVETLRPGADVPAKFDVIVSRAFADLADFVTLARHLVAPGGSIWAMKGVRPDEEIGRLPDGARVKQMIRLTVPSLDAERHLIEVELDEAI.

S-adenosyl-L-methionine contacts are provided by residues Gly-91, Leu-96, 142–143 (VE), and Arg-161.

Belongs to the methyltransferase superfamily. RNA methyltransferase RsmG family.

Its subcellular location is the cytoplasm. It carries out the reaction guanosine(527) in 16S rRNA + S-adenosyl-L-methionine = N(7)-methylguanosine(527) in 16S rRNA + S-adenosyl-L-homocysteine. In terms of biological role, specifically methylates the N7 position of guanine in position 527 of 16S rRNA. This is Ribosomal RNA small subunit methyltransferase G from Burkholderia pseudomallei (strain K96243).